The primary structure comprises 238 residues: dITP/XTP pyrophosphatase (238 aa).

Ser7 to Lys12 contacts substrate. The active-site Proton acceptor is Asp89. Asp89 provides a ligand contact to Mg(2+). Substrate contacts are provided by residues Ser90, Phe191 to Asp194, Lys217, and His222 to Arg223.

The protein belongs to the HAM1 NTPase family. As to quaternary structure, homodimer. It depends on Mg(2+) as a cofactor.

The catalysed reaction is XTP + H2O = XMP + diphosphate + H(+). The enzyme catalyses dITP + H2O = dIMP + diphosphate + H(+). It catalyses the reaction ITP + H2O = IMP + diphosphate + H(+). Its function is as follows. Pyrophosphatase that catalyzes the hydrolysis of nucleoside triphosphates to their monophosphate derivatives, with a high preference for the non-canonical purine nucleotides XTP (xanthosine triphosphate), dITP (deoxyinosine triphosphate) and ITP. Seems to function as a house-cleaning enzyme that removes non-canonical purine nucleotides from the nucleotide pool, thus preventing their incorporation into DNA/RNA and avoiding chromosomal lesions. The polypeptide is dITP/XTP pyrophosphatase (Helicobacter hepaticus (strain ATCC 51449 / 3B1)).